We begin with the raw amino-acid sequence, 135 residues long: Small ribosomal subunit protein eS6 (135 aa).

This sequence belongs to the eukaryotic ribosomal protein eS6 family.

The polypeptide is Small ribosomal subunit protein eS6 (Methanospirillum hungatei JF-1 (strain ATCC 27890 / DSM 864 / NBRC 100397 / JF-1)).